A 448-amino-acid chain; its full sequence is Extracellular serine protease (448 aa).

Residues 1 to 20 (MKLSHLSLAIISAITLAACG) form the signal peptide. Positions 87–109 (KELENQASDDEVDPTKTGVVGNL) are disordered.

Belongs to the peptidase S17 family. The cofactor is a divalent metal cation.

In terms of biological role, this enzyme is a chymotrypsin-like serine protease. Degrades a variety of substrates present in the skin and hoof of the sheep, including elastin, keratin, fibrinogen and collagen. It seems to play an important role in the pathogenesis of sheep footrot. This chain is Extracellular serine protease (prvA), found in Dichelobacter nodosus (Bacteroides nodosus).